The sequence spans 172 residues: UPF0102 protein AM1_3954 (172 aa).

Belongs to the UPF0102 family.

The protein is UPF0102 protein AM1_3954 of Acaryochloris marina (strain MBIC 11017).